The following is a 132-amino-acid chain: L-ectoine synthase (132 aa).

The protein belongs to the ectoine synthase family.

It carries out the reaction (2S)-4-acetamido-2-aminobutanoate = L-ectoine + H2O. It participates in amine and polyamine biosynthesis; ectoine biosynthesis; L-ectoine from L-aspartate 4-semialdehyde: step 3/3. Its function is as follows. Catalyzes the circularization of gamma-N-acetyl-alpha,gamma-diaminobutyric acid (ADABA) to ectoine (1,4,5,6-tetrahydro-2-methyl-4-pyrimidine carboxylic acid), which is an excellent osmoprotectant. The polypeptide is L-ectoine synthase (Hahella chejuensis (strain KCTC 2396)).